The following is a 28-amino-acid chain: Fibrinogen alpha chain (28 aa).

Serine 3 carries the post-translational modification Phosphoserine.

Heterohexamer; disulfide linked. Contains 2 sets of 3 non-identical chains (alpha, beta and gamma). The 2 heterotrimers are in head to head conformation with the N-termini in a small central domain. Post-translationally, conversion of fibrinogen to fibrin is triggered by thrombin, which cleaves fibrinopeptides A and B from alpha and beta chains, and thus exposes the N-terminal polymerization sites responsible for the formation of the soft clot. The soft clot is converted into the hard clot by factor XIIIA which catalyzes the epsilon-(gamma-glutamyl)lysine cross-linking between gamma chains (stronger) and between alpha chains (weaker) of different monomers. Forms F13A-mediated cross-links between a glutamine and the epsilon-amino group of a lysine residue, forming fibronectin-fibrinogen heteropolymers.

Its subcellular location is the secreted. Cleaved by the protease thrombin to yield monomers which, together with fibrinogen beta (FGB) and fibrinogen gamma (FGG), polymerize to form an insoluble fibrin matrix. Fibrin has a major function in hemostasis as one of the primary components of blood clots. In addition, functions during the early stages of wound repair to stabilize the lesion and guide cell migration during re-epithelialization. Was originally thought to be essential for platelet aggregation, based on in vitro studies using anticoagulated blood. However, subsequent studies have shown that it is not absolutely required for thrombus formation in vivo. Enhances expression of SELP in activated platelets via an ITGB3-dependent pathway. Maternal fibrinogen is essential for successful pregnancy. Fibrin deposition is also associated with infection, where it protects against IFNG-mediated hemorrhage. May also facilitate the immune response via both innate and T-cell mediated pathways. The protein is Fibrinogen alpha chain (FGA) of Canis lupus familiaris (Dog).